The sequence spans 228 residues: Ribosomal RNA large subunit methyltransferase E (228 aa).

Glycine 76, tryptophan 78, aspartate 99, aspartate 115, and aspartate 139 together coordinate S-adenosyl-L-methionine. Lysine 179 functions as the Proton acceptor in the catalytic mechanism.

The protein belongs to the class I-like SAM-binding methyltransferase superfamily. RNA methyltransferase RlmE family.

The protein resides in the cytoplasm. It catalyses the reaction uridine(2552) in 23S rRNA + S-adenosyl-L-methionine = 2'-O-methyluridine(2552) in 23S rRNA + S-adenosyl-L-homocysteine + H(+). Its function is as follows. Specifically methylates the uridine in position 2552 of 23S rRNA at the 2'-O position of the ribose in the fully assembled 50S ribosomal subunit. The protein is Ribosomal RNA large subunit methyltransferase E of Nitrobacter hamburgensis (strain DSM 10229 / NCIMB 13809 / X14).